A 300-amino-acid chain; its full sequence is Porphobilinogen deaminase (300 aa).

At Cys242 the chain carries S-(dipyrrolylmethanemethyl)cysteine.

This sequence belongs to the HMBS family. In terms of assembly, monomer. Requires dipyrromethane as cofactor.

The enzyme catalyses 4 porphobilinogen + H2O = hydroxymethylbilane + 4 NH4(+). It functions in the pathway porphyrin-containing compound metabolism; protoporphyrin-IX biosynthesis; coproporphyrinogen-III from 5-aminolevulinate: step 2/4. In terms of biological role, tetrapolymerization of the monopyrrole PBG into the hydroxymethylbilane pre-uroporphyrinogen in several discrete steps. In Blochmanniella pennsylvanica (strain BPEN), this protein is Porphobilinogen deaminase.